The primary structure comprises 110 residues: Quaternary ammonium compound-resistance protein QacE (110 aa).

The next 4 helical transmembrane spans lie at Met-1–Leu-21, Leu-30–Val-50, Val-58–Leu-78, and Ala-85–Ser-105.

Belongs to the drug/metabolite transporter (DMT) superfamily. Small multidrug resistance (SMR) (TC 2.A.7.1) family.

The protein resides in the cell membrane. In terms of biological role, multidrug exporter. Is implicated for the resistance to bacteriocidal quaternary ammonium compounds. The polypeptide is Quaternary ammonium compound-resistance protein QacE (qacE) (Escherichia coli).